Consider the following 1130-residue polypeptide: Transmembrane channel-like protein 3 (1130 aa).

The Cytoplasmic segment spans residues 1–148 (MKTSKASQRY…ASYFIFLRWL (148 aa)). Residues 149-169 (FGINIVLTVMTGAFVVLPELI) traverse the membrane as a helical segment. Over 170-192 (AGQPFGSTASKTIPREQITSAQD) the chain is Extracellular. The helical transmembrane segment at 193-213 (LDTVWSLGGYLQYSVLFYGYY) threads the bilayer. Topologically, residues 214–225 (GRERRIGRAGYR) are cytoplasmic. Residues 226 to 246 (LPLAYFLVGMAVFAYSFIVLL) form a helical membrane-spanning segment. The Extracellular portion of the chain corresponds to 247–319 (KRMAKNSRTS…KNMAVTVCLR (73 aa)). N-linked (GlcNAc...) asparagine glycosylation is present at Asn-264. Residues 320-340 (IIANILVLLSLAGSIYLIYFV) traverse the membrane as a helical segment. Over 341–361 (VDRSQKLEQSKKELTLWEKNE) the chain is Cytoplasmic. Residues 362–382 (VSVVVSLVTMLAPSAFDLIAA) form a helical membrane-spanning segment. Topologically, residues 383–393 (LEMYHPRTTLR) are extracellular. The chain crosses the membrane as a helical span at residues 394–414 (FQLARVLVLYLGNLYSLIIAL). At 415–509 (LDKVNSMNIE…CWETYVGQEM (95 aa)) the chain is on the cytoplasmic side. A helical membrane pass occupies residues 510–530 (LKLSVIDMLFTVASILLIDFF). The Extracellular portion of the chain corresponds to 531–570 (RGLFVRYLSDYWCWDLESKFPEYGEFKIAENVLHLVYNQG). A helical membrane pass occupies residues 571 to 591 (MIWMGAFFSPCLPAFNVLKLI). The Cytoplasmic portion of the chain corresponds to 592–619 (GLMYLRSWAVLTCNVPHQQVFRASRSNN). Residues 620 to 640 (FYLAMLLFMLFLCMLPTIFAI) traverse the membrane as a helical segment. Residues 641–680 (VHYKPSLNCGPFSGQEKIYDIVSETIENDFPTWFHAVVGH) lie on the Extracellular side of the membrane. The chain crosses the membrane as a helical span at residues 681-701 (ISSPVVILPAVLLLFMLIYYL). The Cytoplasmic segment spans residues 702–1130 (QSIARSLKLS…DLNDLICSNV (429 aa)). Disordered regions lie at residues 742-774 (DARQ…EESS), 819-893 (RSLP…FQPI), 999-1019 (SSCF…KYQR), 1033-1059 (QLER…LKAR), and 1097-1116 (QGRF…KSRQ). Residues 747 to 767 (GSATEAESSENSKPKTLQARI) are compositionally biased toward polar residues. Over residues 840 to 850 (SRSRPEQDTNR) the composition is skewed to basic and acidic residues. A compositionally biased stretch (polar residues) spans 856-876 (CSSTSNLHKNRSCSSVTQTQP). Basic and acidic residues-rich tracts occupy residues 878–890 (KDVR…RKDF) and 1006–1017 (DRSENNTRDPKY). Positions 1097–1106 (QGRFPRSASQ) are enriched in polar residues.

The protein belongs to the TMC family. As to expression, detected in most neuronal organs and also in some non-neuronal tissues.

It localises to the membrane. Probable component of an ion channel. Molecular function hasn't been characterized yet. This is Transmembrane channel-like protein 3 from Mus musculus (Mouse).